The primary structure comprises 418 residues: MEKQTRLSDLPDELLLKILSALPMFKVTLATRLISRRWKGPWKLVPDVTFDDDDIPFKSFETFMSFVYGSFLSNDAQILDRLHLKLNQKYSASDINFWVQVAVNRSVRELRIDLFGKTLELPCCLCSCITLKELTLHDLCIKVVPAWFRLPSLKTLHLLSVKFSSDGFVASILRICPVLERLVVDGTKGNVMITNIDVPTLRNLSIRNSKGKGTYVEGSKGFVIKAPSLTDLNFEDTLSNFLMFEPMPEVIKADIQVICDQSKNFIGSLTSIQHLSLCSLTSKTPYPACTVFSSLKYLELCTCSARWANLFACILNAAPELRSLKLKSKHKFNYNDPMTLWEEPAVVAKCLSEHLEIFEWRQYEGTEQERNVAGYILANATCLKMATFSTRCRNRNHRMLKKLKSMDRVSKACRLVFD.

One can recognise an F-box domain in the interval 4–60 (QTRLSDLPDELLLKILSALPMFKVTLATRLISRRWKGPWKLVPDVTFDDDDIPFKSF). An FBD domain is found at 340-390 (LWEEPAVVAKCLSEHLEIFEWRQYEGTEQERNVAGYILANATCLKMATFST).

This is Putative FBD-associated F-box protein At5g56560 from Arabidopsis thaliana (Mouse-ear cress).